The sequence spans 608 residues: UvrABC system protein C (608 aa).

One can recognise a GIY-YIG domain in the interval 13–91; sequence HKPGVYIMHD…IKKNSPKYNI (79 aa). The UVR domain maps to 202 to 237; it reads DELTKKLTDKMMAASKNLNFELAAKLRDSITNIQVI.

This sequence belongs to the UvrC family. In terms of assembly, interacts with UvrB in an incision complex.

The protein localises to the cytoplasm. Functionally, the UvrABC repair system catalyzes the recognition and processing of DNA lesions. UvrC both incises the 5' and 3' sides of the lesion. The N-terminal half is responsible for the 3' incision and the C-terminal half is responsible for the 5' incision. The sequence is that of UvrABC system protein C from Finegoldia magna (strain ATCC 29328 / DSM 20472 / WAL 2508) (Peptostreptococcus magnus).